A 125-amino-acid chain; its full sequence is Diol dehydratase-reactivating factor small subunit (125 aa).

Glutamate 31 contacts Mg(2+).

The protein belongs to the DdrB/PduH family. In terms of assembly, component of the DDR complex, a heterotetramer of DdrA(2)/DdrB(2). The DDR complex interacts with the diol dehydratase complex in the presence of ADP but not ATP. The cofactor is Mg(2+).

The catalysed reaction is ATP + H2O = ADP + phosphate + H(+). Its function is as follows. Small subunit of the diol dehydratase-reactivating factor (DDR), which reactivates suicidally inhibited adenosylcobalamin-dependent diol dehydratase (DD, pddA, pddB, pddC). DDR acts as a chaperone, reactivates inactivated DD holoenzyme in the presence of ATP, Mg(2+) and free adenosylcobalamin (AdoCbl), by mediating the exchange of the tightly bound damaged cofactor AdoCbl for a free intact one. Reactivation takes place in two steps: ADP-dependent cobalamin release, and ATP-dependent dissociation of the DD apoenzyme-DDR complex. DDR has weak ATPase activity which is required for DD reactivation. Activates glycerol-inactivated, O2-inactivated holoenzyme and inactivated enzyme-cyanocobalamin complex. Also reactivates glycerol-inactivated hologlycerol dehydratase, a DD isozyme. The polypeptide is Diol dehydratase-reactivating factor small subunit (Klebsiella michiganensis (strain ATCC 8724 / DSM 4798 / JCM 20051 / NBRC 3318 / NRRL B-199 / KCTC 1686 / BUCSAV 143 / CCM 1901)).